A 505-amino-acid polypeptide reads, in one-letter code: Maturase K (505 aa).

It belongs to the intron maturase 2 family. MatK subfamily.

It is found in the plastid. Its subcellular location is the chloroplast. Functionally, usually encoded in the trnK tRNA gene intron. Probably assists in splicing its own and other chloroplast group II introns. This chain is Maturase K, found in Sciadopitys verticillata (Japanese umbrella-pine).